Reading from the N-terminus, the 364-residue chain is ATP synthase gamma chain, chloroplastic (364 aa).

The transit peptide at 1–41 (MACSLSFSSSVSTFHLPTTTQSTQAPPNNATTLPTTNPIQC) directs the protein to the chloroplast. Positions 17-36 (PTTTQSTQAPPNNATTLPTT) are disordered. Low complexity predominate over residues 25–36 (APPNNATTLPTT). The active site involves C130. A disulfide bridge links C240 with C246.

The protein belongs to the ATPase gamma chain family. In terms of assembly, F-type ATPases have 2 components, CF(1) - the catalytic core - and CF(0) - the membrane proton channel. CF(1) has five subunits: alpha(3), beta(3), gamma(1), delta(1), epsilon(1). CF(0) has four main subunits: a, b, b' and c. Disulfide bond; Cys-240 and Cys-246 are known to form a disulfide bridge in the dark which gives rise to an inactive enzyme. Activation can be brought about by a ferredoxin-dependent reduction of the disulfide bond in the light.

It is found in the plastid. It localises to the chloroplast thylakoid membrane. Functionally, produces ATP from ADP in the presence of a proton gradient across the membrane. The gamma chain is believed to be important in regulating ATPase activity and the flow of protons through the CF(0) complex. The polypeptide is ATP synthase gamma chain, chloroplastic (ATPC) (Spinacia oleracea (Spinach)).